Consider the following 224-residue polypeptide: Oxalate oxidase 2 (224 aa).

An N-terminal signal peptide occupies residues 1–23 (MGYSKTLAVSLFAVLLLAPAVLA). A disulfide bond links cysteine 33 and cysteine 49. One can recognise a Cupin type-1 domain in the interval 63-214 (SKLAKAGNTS…ALRVEAGVVE (152 aa)). Residues asparagine 70 and asparagine 75 are each glycosylated (N-linked (GlcNAc...) asparagine). Histidine 111, histidine 113, glutamate 118, and histidine 160 together coordinate Mn(2+).

It belongs to the germin family. Oligomer (believed to be a pentamer but probably hexamer). In terms of processing, glycosylated. A form called G contains antennary GlcNAc residues, whereas a form called G' lacks antennary GlcNAc residues in its otherwise identical glycans. Root.

It localises to the secreted. The protein localises to the extracellular space. The protein resides in the apoplast. Its subcellular location is the cell wall. It carries out the reaction oxalate + O2 + 2 H(+) = H2O2 + 2 CO2. Functionally, releases hydrogen peroxide in the apoplast. May play an important role in several aspects of plant growth and defense mechanisms. The chain is Oxalate oxidase 2 from Hordeum vulgare (Barley).